The sequence spans 191 residues: Ribosomal RNA small subunit methyltransferase G (191 aa).

Residues glycine 62, phenylalanine 67, isoleucine 111–glutamate 112, and arginine 124 contribute to the S-adenosyl-L-methionine site.

It belongs to the methyltransferase superfamily. RNA methyltransferase RsmG family.

The protein localises to the cytoplasm. It catalyses the reaction guanosine(527) in 16S rRNA + S-adenosyl-L-methionine = N(7)-methylguanosine(527) in 16S rRNA + S-adenosyl-L-homocysteine. In terms of biological role, specifically methylates the N7 position of guanine in position 527 of 16S rRNA. In Rickettsia prowazekii (strain Madrid E), this protein is Ribosomal RNA small subunit methyltransferase G.